We begin with the raw amino-acid sequence, 357 residues long: UDP-N-acetylglucosamine--N-acetylmuramyl-(pentapeptide) pyrophosphoryl-undecaprenol N-acetylglucosamine transferase (357 aa).

UDP-N-acetyl-alpha-D-glucosamine-binding positions include 14–16 (TGG), asparagine 128, arginine 169, serine 193, isoleucine 248, and glutamine 292.

This sequence belongs to the glycosyltransferase 28 family. MurG subfamily.

Its subcellular location is the cell inner membrane. It carries out the reaction di-trans,octa-cis-undecaprenyl diphospho-N-acetyl-alpha-D-muramoyl-L-alanyl-D-glutamyl-meso-2,6-diaminopimeloyl-D-alanyl-D-alanine + UDP-N-acetyl-alpha-D-glucosamine = di-trans,octa-cis-undecaprenyl diphospho-[N-acetyl-alpha-D-glucosaminyl-(1-&gt;4)]-N-acetyl-alpha-D-muramoyl-L-alanyl-D-glutamyl-meso-2,6-diaminopimeloyl-D-alanyl-D-alanine + UDP + H(+). Its pathway is cell wall biogenesis; peptidoglycan biosynthesis. Cell wall formation. Catalyzes the transfer of a GlcNAc subunit on undecaprenyl-pyrophosphoryl-MurNAc-pentapeptide (lipid intermediate I) to form undecaprenyl-pyrophosphoryl-MurNAc-(pentapeptide)GlcNAc (lipid intermediate II). The polypeptide is UDP-N-acetylglucosamine--N-acetylmuramyl-(pentapeptide) pyrophosphoryl-undecaprenol N-acetylglucosamine transferase (Bdellovibrio bacteriovorus (strain ATCC 15356 / DSM 50701 / NCIMB 9529 / HD100)).